The sequence spans 29 residues: GLWKSLLKNVGKAAGKAALNAVTDMVNQS.

As to expression, expressed by the skin glands.

The protein resides in the secreted. Its function is as follows. Has antimicrobial activity. This chain is Dermaseptin-J9, found in Phasmahyla jandaia (Jandaia leaf frog).